The sequence spans 122 residues: UPF0102 protein CLL_A1253 (122 aa).

The protein belongs to the UPF0102 family.

In Clostridium botulinum (strain Eklund 17B / Type B), this protein is UPF0102 protein CLL_A1253.